We begin with the raw amino-acid sequence, 289 residues long: uncharacterized protein (289 aa).

Residues 268-289 (SDDGYETQWSDGPYSIPSGLSD) are disordered.

This is an uncharacterized protein from Zea mays (Maize).